Here is a 277-residue protein sequence, read N- to C-terminus: Large ribosomal subunit protein uL2c (277 aa).

Disordered stretches follow at residues 36–56 (NKHS…HRGG) and 225–259 (MNSV…GSKS).

The protein belongs to the universal ribosomal protein uL2 family. In terms of assembly, part of the 50S ribosomal subunit.

It is found in the plastid. The protein localises to the chloroplast. This chain is Large ribosomal subunit protein uL2c (rpl2), found in Psilotum nudum (Whisk fern).